The sequence spans 91 residues: Small ribosomal subunit protein uS15 (91 aa).

This sequence belongs to the universal ribosomal protein uS15 family. In terms of assembly, part of the 30S ribosomal subunit. Forms a bridge to the 50S subunit in the 70S ribosome, contacting the 23S rRNA.

One of the primary rRNA binding proteins, it binds directly to 16S rRNA where it helps nucleate assembly of the platform of the 30S subunit by binding and bridging several RNA helices of the 16S rRNA. Its function is as follows. Forms an intersubunit bridge (bridge B4) with the 23S rRNA of the 50S subunit in the ribosome. The protein is Small ribosomal subunit protein uS15 of Rickettsia typhi (strain ATCC VR-144 / Wilmington).